A 345-amino-acid chain; its full sequence is D(2) dopamine receptor B (345 aa).

At Glu-1–Asp-10 the chain is on the extracellular side. A disulfide bridge connects residues Cys-9 and Cys-84. The helical transmembrane segment at Ile-11–Ile-32 threads the bilayer. Over Asp-33 to Arg-53 the chain is Cytoplasmic. A helical membrane pass occupies residues Val-54–Phe-74. At Gly-75–Ala-90 the chain is on the extracellular side. N-linked (GlcNAc...) asparagine glycosylation occurs at Asn-77. Residues Phe-91–Tyr-115 traverse the membrane as a helical segment. Over Ile-116 to Gln-275 the chain is Cytoplasmic. A compositionally biased stretch (basic and acidic residues) spans Lys-166–Asp-177. Residues Lys-166–Pro-199 are disordered. The chain crosses the membrane as a helical span at residues Met-276 to Leu-297. At Asn-298 to Ser-311 the chain is on the extracellular side. A disulfide bridge links Cys-301 with Cys-303. The helical transmembrane segment at Ala-312–Val-333 threads the bilayer. Residues Glu-334–Cys-345 are Cytoplasmic-facing. Cys-345 is lipidated: S-palmitoyl cysteine.

It belongs to the G-protein coupled receptor 1 family. Palmitoylated. Palmitoylation is probably required for proper localization to the plasma membrane and stability of the receptor. As to expression, brain; pituitary.

It is found in the cell membrane. It localises to the golgi apparatus membrane. Its function is as follows. This is one of the five types (D1 to D5) of receptors for dopamine. The activity of this receptor is mediated by G proteins which inhibits adenylyl cyclase. In Xenopus D2R is involved in the regulation of the melanotrope cells of the intermediate pituitary during background adaptation of the animal. In Xenopus laevis (African clawed frog), this protein is D(2) dopamine receptor B (drd2-b).